The following is a 65-amino-acid chain: Large ribosomal subunit protein bL35 (65 aa).

Belongs to the bacterial ribosomal protein bL35 family.

In Psychrobacter sp. (strain PRwf-1), this protein is Large ribosomal subunit protein bL35.